Reading from the N-terminus, the 189-residue chain is Ribonuclease M5 2 (189 aa).

The Toprim domain maps to 8–91; it reads SQVIVAEGRD…VFLKRDEAVP (84 aa). The Mg(2+) site is built by Glu14, Asp60, and Asp62.

Belongs to the ribonuclease M5 family. It depends on Mg(2+) as a cofactor.

It localises to the cytoplasm. It catalyses the reaction Endonucleolytic cleavage of RNA, removing 21 and 42 nucleotides, respectively, from the 5'- and 3'-termini of a 5S-rRNA precursor.. In terms of biological role, required for correct processing of both the 5' and 3' ends of 5S rRNA precursor. Cleaves both sides of a double-stranded region yielding mature 5S rRNA in one step. The polypeptide is Ribonuclease M5 2 (Ligilactobacillus salivarius (strain UCC118) (Lactobacillus salivarius)).